The chain runs to 212 residues: Thymidylate kinase (212 aa).

Glycine 11–threonine 18 is a binding site for ATP.

Belongs to the thymidylate kinase family.

The catalysed reaction is dTMP + ATP = dTDP + ADP. Functionally, phosphorylation of dTMP to form dTDP in both de novo and salvage pathways of dTTP synthesis. The chain is Thymidylate kinase from Streptococcus mutans serotype c (strain ATCC 700610 / UA159).